The primary structure comprises 229 residues: Multiple organellar RNA editing factor 5, chloroplastic/mitochondrial (229 aa).

Residues 1–57 (MAKTLARSTASRITKRLISTSGATTPSPSYILSRRSTPVFSHAVGFISSLNRFTTIR) constitute a chloroplast and mitochondrion transit peptide.

It belongs to the MORF family. As to quaternary structure, homodimer and heterodimers with MORF8/RIP1, MORF3/RIP3, MORF6/RIP6, MORF7/RIP7 and MORF9/RIP9.

It localises to the mitochondrion. The protein resides in the plastid. It is found in the chloroplast. In terms of biological role, involved in organellar RNA editing. Required for the processing of few RNA editing sites in mitochondria. This chain is Multiple organellar RNA editing factor 5, chloroplastic/mitochondrial, found in Arabidopsis thaliana (Mouse-ear cress).